The primary structure comprises 394 residues: GDNF family receptor alpha-like (394 aa).

The first 19 residues, Met-1–Ser-19, serve as a signal peptide directing secretion. The Extracellular segment spans residues Gln-20–Gly-350. N-linked (GlcNAc...) asparagine glycosylation is found at Asn-65, Asn-101, and Asn-115. Intrachain disulfides connect Cys-132–Cys-190, Cys-139–Cys-145, Cys-156–Cys-168, Cys-163–Cys-211, Cys-192–Cys-199, Cys-221–Cys-292, Cys-228–Cys-234, Cys-245–Cys-276, Cys-253–Cys-259, Cys-270–Cys-317, and Cys-294–Cys-305. The tract at residues Ala-150–Arg-229 is required for interaction with GDF15. A helical transmembrane segment spans residues Glu-351 to Leu-371. The Cytoplasmic portion of the chain corresponds to Lys-372 to Gln-394.

This sequence belongs to the GDNFR family. Interacts (via the extracellular domain) with GDF15 and RET; receptor of GDF15, mediates cellular signaling through interaction with RET after GDF15-binding. Interaction with RET requires previous GDF15-binding. Post-translationally, cleaved and inactivated by MMP14, inhibiting the GDF15-GFRAL aversive response. In terms of tissue distribution, expressed in the brainstem, restricted to cells in the area postrema and the immediately adjacent region of the nucleus tractus solitarius. Detected at low levels in testis.

It is found in the cell membrane. Functionally, brainstem-restricted receptor for GDF15 hormone, which triggers an aversive response, characterized by nausea, vomiting, and/or loss of appetite in response to various stresses. The aversive response is both required to reduce continuing exposure to those stresses at the time of exposure and to promote avoidance behavior in the future. The GDF15-GFRAL aversive response is triggered by stresses, such as anticancer drugs (camptothecin or cisplatin), cancers or drugs such as metformin. Upon interaction with its ligand, GDF15, mediates the GDF15-induced autophosphorylation and activation of the RET tyrosine kinase receptor, leading to activation of MAPK- and AKT- signaling pathways. Ligand-binding activates GFRAL-expressing neurons localized in the area postrema and nucleus tractus solitarius of the brainstem. The GDF15-GFRAL signal induces expression of genes involved in metabolism, such as lipid metabolism in adipose tissues. This chain is GDNF family receptor alpha-like, found in Rattus norvegicus (Rat).